The primary structure comprises 127 residues: Aspartate 1-decarboxylase (127 aa).

The Schiff-base intermediate with substrate; via pyruvic acid role is filled by S25. S25 bears the Pyruvic acid (Ser) mark. T57 is a binding site for substrate. The active-site Proton donor is the Y58. Residue 73-75 (GAA) coordinates substrate.

This sequence belongs to the PanD family. Heterooctamer of four alpha and four beta subunits. It depends on pyruvate as a cofactor. Post-translationally, is synthesized initially as an inactive proenzyme, which is activated by self-cleavage at a specific serine bond to produce a beta-subunit with a hydroxyl group at its C-terminus and an alpha-subunit with a pyruvoyl group at its N-terminus.

Its subcellular location is the cytoplasm. The enzyme catalyses L-aspartate + H(+) = beta-alanine + CO2. Its pathway is cofactor biosynthesis; (R)-pantothenate biosynthesis; beta-alanine from L-aspartate: step 1/1. Catalyzes the pyruvoyl-dependent decarboxylation of aspartate to produce beta-alanine. In Neisseria gonorrhoeae (strain ATCC 700825 / FA 1090), this protein is Aspartate 1-decarboxylase.